The chain runs to 430 residues: Adenylosuccinate synthetase (430 aa).

Residues 13 to 19 (GDEGKGK) and 41 to 43 (GHT) each bind GTP. Asp-14 functions as the Proton acceptor in the catalytic mechanism. Asp-14 and Gly-41 together coordinate Mg(2+). Residues 14–17 (DEGK), 39–42 (NAGH), Thr-130, Arg-144, Gln-225, Thr-240, and Arg-304 each bind IMP. The Proton donor role is filled by His-42. 300–306 (STTGRAR) provides a ligand contact to substrate. Residues Arg-306, 332-334 (KLD), and 414-416 (STG) contribute to the GTP site.

This sequence belongs to the adenylosuccinate synthetase family. As to quaternary structure, homodimer. Mg(2+) serves as cofactor.

The protein resides in the cytoplasm. The enzyme catalyses IMP + L-aspartate + GTP = N(6)-(1,2-dicarboxyethyl)-AMP + GDP + phosphate + 2 H(+). It participates in purine metabolism; AMP biosynthesis via de novo pathway; AMP from IMP: step 1/2. Plays an important role in the de novo pathway of purine nucleotide biosynthesis. Catalyzes the first committed step in the biosynthesis of AMP from IMP. The protein is Adenylosuccinate synthetase of Pseudomonas putida (strain ATCC 700007 / DSM 6899 / JCM 31910 / BCRC 17059 / LMG 24140 / F1).